A 1207-amino-acid polypeptide reads, in one-letter code: Ras GTPase-activating protein gap-2 (1207 aa).

2 disordered regions span residues M1 to K29 and R221 to R316. The 344-residue stretch at P40–N383 folds into the PH domain. Over residues S223–S236 the composition is skewed to low complexity. 2 stretches are compositionally biased toward polar residues: residues T237–Y247 and A286–Y297. The 117-residue stretch at W374–Y490 folds into the C2 domain. Over residues S495–I504 the composition is skewed to polar residues. Positions S495 to E516 are disordered. A Ras-GAP domain is found at N579–I789. Disordered regions lie at residues G856–S903, F923–S1013, A1086–R1107, and L1163–N1207. Polar residues-rich tracts occupy residues M862–Q876 and T891–S903. The span at T939–S953 shows a compositional bias: low complexity. The segment covering E955–R972 has biased composition (basic and acidic residues). The span at A985–S1013 shows a compositional bias: low complexity. Positions S1181–N1207 are enriched in low complexity.

As to expression, mainly expressed in gonads and vulval cells. Isoform c in expressed in pharyngeal epithelial cells and several rectal/blast cells in the tail region. Isoform f is weakly expressed in four cells symmetrically located in the vulval region. Isoform g is strongly expressed in the pharyngeal muscle cells m6 in addition to several cells in the tail region.

It is found in the cytoplasm. Its function is as follows. GTPase-activating protein, which acts as a negative regulator for the member of the Ras family let-60. Probably decreases the signaling activity of Ras by stimulating its intrinsic GTPase activity, thereby lowering the levels of GTP-bound, active Ras. The different isoforms may play a distinct role in specific tissues. This is Ras GTPase-activating protein gap-2 (gap-2) from Caenorhabditis elegans.